The following is a 668-amino-acid chain: Threonine--tRNA ligase (668 aa).

The 61-residue stretch at 1 to 61 (MSDLKIALTH…ADGDQVEPVA (61 aa)) folds into the TGS domain. Residues 265–564 (DHRKLGRDLD…LVEHYAGAFP (300 aa)) form a catalytic region. Residues Cys358, His409, and His541 each coordinate Zn(2+).

Belongs to the class-II aminoacyl-tRNA synthetase family. Homodimer. Zn(2+) is required as a cofactor.

The protein localises to the cytoplasm. It carries out the reaction tRNA(Thr) + L-threonine + ATP = L-threonyl-tRNA(Thr) + AMP + diphosphate + H(+). In terms of biological role, catalyzes the attachment of threonine to tRNA(Thr) in a two-step reaction: L-threonine is first activated by ATP to form Thr-AMP and then transferred to the acceptor end of tRNA(Thr). Also edits incorrectly charged L-seryl-tRNA(Thr). This is Threonine--tRNA ligase from Nocardioides sp. (strain ATCC BAA-499 / JS614).